A 337-amino-acid chain; its full sequence is Inositol 2-dehydrogenase (337 aa).

This sequence belongs to the Gfo/Idh/MocA family. In terms of assembly, homotetramer.

It catalyses the reaction myo-inositol + NAD(+) = scyllo-inosose + NADH + H(+). Involved in the oxidation of myo-inositol (MI) to 2-keto-myo-inositol (2KMI or 2-inosose). This is Inositol 2-dehydrogenase from Corynebacterium glutamicum (strain ATCC 13032 / DSM 20300 / JCM 1318 / BCRC 11384 / CCUG 27702 / LMG 3730 / NBRC 12168 / NCIMB 10025 / NRRL B-2784 / 534).